An 888-amino-acid polypeptide reads, in one-letter code: Probable disease resistance protein At5g63020 (888 aa).

A coiled-coil region spans residues 22–66; the sequence is LNRNGDYIHGLEENLTALQRALEQIEQRREDLLRKILSEERRGLQ. An NB-ARC domain is found at 139–442; it reads AERVDAARVE…GEGFIDRNKG (304 aa). Residue 181-188 participates in ATP binding; sequence GMGGVGKT. LRR repeat units follow at residues 512–533, 534–555, 558–580, 582–604, and 605–627; these read VARRVSLMFNNIESIRDAPESP, QLITLLLRKNFLGHISSSFFRL, MLVVLDLSMNRDLRHLPNEISEC, SLQYLSLSRTRIRIWPAGLVELR, and KLLYLNLEYTRMVESICGISGLT.

It belongs to the disease resistance NB-LRR family.

Probable disease resistance protein. The protein is Probable disease resistance protein At5g63020 of Arabidopsis thaliana (Mouse-ear cress).